A 183-amino-acid polypeptide reads, in one-letter code: Capsid protein (183 aa).

The segment at N136 to C183 is disordered. Residues V149–S176 show a composition bias toward basic residues. S155, S162, and S170 each carry phosphoserine; by host. Residues S155–T160 form a 1; half-length repeat. Positions S155 to S176 are 3 X 7 AA repeats of S-P-R-R-R-[PR]-S. The Bipartite nuclear localization signal motif lies at R158 to R175. 2 repeat units span residues S162 to S168 and S170 to S176. The segment at Q177–C183 is RNA binding.

It belongs to the orthohepadnavirus core antigen family. As to quaternary structure, homodimerizes, then multimerizes. Interacts with cytosol exposed regions of viral L glycoprotein present in the reticulum-to-Golgi compartment. Interacts with human FLNB. Phosphorylated form interacts with host importin alpha; this interaction depends on the exposure of the NLS, which itself depends upon genome maturation and/or phosphorylation of the capsid protein. Interacts with host NUP153. In terms of processing, phosphorylated by host SRPK1, SRPK2, and maybe protein kinase C or GAPDH. Phosphorylation is critical for pregenomic RNA packaging. Protein kinase C phosphorylation is stimulated by HBx protein and may play a role in transport of the viral genome to the nucleus at the late step during the viral replication cycle.

Its subcellular location is the virion. The protein resides in the host cytoplasm. Its function is as follows. Self assembles to form an icosahedral capsid. Most capsids appear to be large particles with an icosahedral symmetry of T=4 and consist of 240 copies of capsid protein, though a fraction forms smaller T=3 particles consisting of 180 capsid proteins. Entering capsids are transported along microtubules to the nucleus. Phosphorylation of the capsid is thought to induce exposure of nuclear localization signal in the C-terminal portion of the capsid protein that allows binding to the nuclear pore complex via the importin (karyopherin-) alpha and beta. Capsids are imported in intact form through the nuclear pore into the nuclear basket, where it probably binds NUP153. Only capsids that contain the mature viral genome can release the viral DNA and capsid protein into the nucleoplasm. Immature capsids get stuck in the basket. Capsids encapsulate the pre-genomic RNA and the P protein. Pre-genomic RNA is reverse-transcribed into DNA while the capsid is still in the cytoplasm. The capsid can then either be directed to the nucleus, providing more genomes for transcription, or bud through the endoplasmic reticulum to provide new virions. The sequence is that of Capsid protein from Homo sapiens (Human).